The following is a 166-amino-acid chain: NAD(P)H-quinone oxidoreductase subunit I, chloroplastic (166 aa).

4Fe-4S ferredoxin-type domains lie at 55–84 (GRIHFEFDKCIACEVCVRVCPIDLPVVDWK) and 95–124 (LNYSIDFGICIFCGNCVEYCPTNCLSMTEE). The [4Fe-4S] cluster site is built by Cys64, Cys67, Cys70, Cys74, Cys104, Cys107, Cys110, and Cys114.

Belongs to the complex I 23 kDa subunit family. NDH is composed of at least 16 different subunits, 5 of which are encoded in the nucleus. [4Fe-4S] cluster is required as a cofactor.

Its subcellular location is the plastid. It localises to the chloroplast thylakoid membrane. The enzyme catalyses a plastoquinone + NADH + (n+1) H(+)(in) = a plastoquinol + NAD(+) + n H(+)(out). It catalyses the reaction a plastoquinone + NADPH + (n+1) H(+)(in) = a plastoquinol + NADP(+) + n H(+)(out). Its function is as follows. NDH shuttles electrons from NAD(P)H:plastoquinone, via FMN and iron-sulfur (Fe-S) centers, to quinones in the photosynthetic chain and possibly in a chloroplast respiratory chain. The immediate electron acceptor for the enzyme in this species is believed to be plastoquinone. Couples the redox reaction to proton translocation, and thus conserves the redox energy in a proton gradient. The sequence is that of NAD(P)H-quinone oxidoreductase subunit I, chloroplastic from Tridax balbisioides (Coatbuttons).